We begin with the raw amino-acid sequence, 45 residues long: DNA-directed RNA polymerase subunit Rpo12 (45 aa).

Zn(2+)-binding residues include C8, C23, and C26.

The protein belongs to the archaeal Rpo12/eukaryotic RPC10 RNA polymerase subunit family. As to quaternary structure, part of the RNA polymerase complex. Requires Zn(2+) as cofactor.

It localises to the cytoplasm. The catalysed reaction is RNA(n) + a ribonucleoside 5'-triphosphate = RNA(n+1) + diphosphate. Its function is as follows. DNA-dependent RNA polymerase (RNAP) catalyzes the transcription of DNA into RNA using the four ribonucleoside triphosphates as substrates. The chain is DNA-directed RNA polymerase subunit Rpo12 from Methanosarcina acetivorans (strain ATCC 35395 / DSM 2834 / JCM 12185 / C2A).